The chain runs to 251 residues: 5'-nucleotidase SurE (251 aa).

Positions 8, 9, 39, and 95 each coordinate a divalent metal cation.

It belongs to the SurE nucleotidase family. It depends on a divalent metal cation as a cofactor.

It localises to the cytoplasm. It catalyses the reaction a ribonucleoside 5'-phosphate + H2O = a ribonucleoside + phosphate. In terms of biological role, nucleotidase that shows phosphatase activity on nucleoside 5'-monophosphates. In Clostridium botulinum (strain Eklund 17B / Type B), this protein is 5'-nucleotidase SurE.